A 444-amino-acid chain; its full sequence is L-cysteine:1D-myo-inositol 2-amino-2-deoxy-alpha-D-glucopyranoside ligase (444 aa).

C66 contributes to the Zn(2+) binding site. L-cysteinyl-5'-AMP is bound by residues 66-69, T81, and 104-106; these read CGIT and NVT. Residues 68–78 carry the 'HIGH' region motif; sequence ITPYDATHLGH. The 'ERGGDP' region signature appears at 206–211; sequence EHGGDP. W246 is a binding site for L-cysteinyl-5'-AMP. C250 is a binding site for Zn(2+). 268 to 270 contacts L-cysteinyl-5'-AMP; sequence GSD. A Zn(2+)-binding site is contributed by H275. V302 contacts L-cysteinyl-5'-AMP. The 'KMSKS' region signature appears at 308–312; sequence KMSKS.

This sequence belongs to the class-I aminoacyl-tRNA synthetase family. MshC subfamily. In terms of assembly, monomer. Requires Zn(2+) as cofactor.

It catalyses the reaction 1D-myo-inositol 2-amino-2-deoxy-alpha-D-glucopyranoside + L-cysteine + ATP = 1D-myo-inositol 2-(L-cysteinylamino)-2-deoxy-alpha-D-glucopyranoside + AMP + diphosphate + H(+). In terms of biological role, catalyzes the ATP-dependent condensation of GlcN-Ins and L-cysteine to form L-Cys-GlcN-Ins. The sequence is that of L-cysteine:1D-myo-inositol 2-amino-2-deoxy-alpha-D-glucopyranoside ligase from Parafrankia sp. (strain EAN1pec).